An 85-amino-acid chain; its full sequence is UPF0291 protein SSA_1878 (85 aa).

The interval 58–85 (GNDVTPEKLRQVQREKGLHGRSLDDPES) is disordered. A compositionally biased stretch (basic and acidic residues) spans 62–85 (TPEKLRQVQREKGLHGRSLDDPES).

It belongs to the UPF0291 family.

The protein localises to the cytoplasm. The polypeptide is UPF0291 protein SSA_1878 (Streptococcus sanguinis (strain SK36)).